A 228-amino-acid polypeptide reads, in one-letter code: Cytochrome c biogenesis ATP-binding export protein CcmA (228 aa).

An ABC transporter domain is found at 2 to 227 (LSIERLGVGR…LHLERSGAWL (226 aa)). 34–41 (GANGSGKT) lines the ATP pocket. The disordered stretch occupies residues 106 to 126 (GAPDGTSSVPASGRSGVAAPP).

It belongs to the ABC transporter superfamily. CcmA exporter (TC 3.A.1.107) family. The complex is composed of two ATP-binding proteins (CcmA) and two transmembrane proteins (CcmB).

The protein resides in the cell inner membrane. It carries out the reaction heme b(in) + ATP + H2O = heme b(out) + ADP + phosphate + H(+). Functionally, part of the ABC transporter complex CcmAB involved in the biogenesis of c-type cytochromes; once thought to export heme, this seems not to be the case, but its exact role is uncertain. Responsible for energy coupling to the transport system. This is Cytochrome c biogenesis ATP-binding export protein CcmA from Paraburkholderia xenovorans (strain LB400).